We begin with the raw amino-acid sequence, 421 residues long: Serine--tRNA ligase (421 aa).

Residue 229–231 participates in L-serine binding; it reads TAE. 260-262 lines the ATP pocket; sequence RAE. Glu283 is an L-serine binding site. 347–350 is a binding site for ATP; the sequence is EISS. Ser383 serves as a coordination point for L-serine.

It belongs to the class-II aminoacyl-tRNA synthetase family. Type-1 seryl-tRNA synthetase subfamily. Homodimer. The tRNA molecule binds across the dimer.

It is found in the cytoplasm. The catalysed reaction is tRNA(Ser) + L-serine + ATP = L-seryl-tRNA(Ser) + AMP + diphosphate + H(+). It carries out the reaction tRNA(Sec) + L-serine + ATP = L-seryl-tRNA(Sec) + AMP + diphosphate + H(+). The protein operates within aminoacyl-tRNA biosynthesis; selenocysteinyl-tRNA(Sec) biosynthesis; L-seryl-tRNA(Sec) from L-serine and tRNA(Sec): step 1/1. Its function is as follows. Catalyzes the attachment of serine to tRNA(Ser). Is also able to aminoacylate tRNA(Sec) with serine, to form the misacylated tRNA L-seryl-tRNA(Sec), which will be further converted into selenocysteinyl-tRNA(Sec). This chain is Serine--tRNA ligase, found in Desulfitobacterium hafniense (strain Y51).